We begin with the raw amino-acid sequence, 299 residues long: UTP--glucose-1-phosphate uridylyltransferase 1 (299 aa).

This sequence belongs to the UDPGP type 2 family.

The catalysed reaction is alpha-D-glucose 1-phosphate + UTP + H(+) = UDP-alpha-D-glucose + diphosphate. Its pathway is carbohydrate metabolism; nucleotide-sugar metabolism. This is UTP--glucose-1-phosphate uridylyltransferase 1 (hasC1) from Streptococcus pyogenes serotype M6 (strain ATCC BAA-946 / MGAS10394).